Here is an 89-residue protein sequence, read N- to C-terminus: Nucleoside triphosphatase I (89 aa).

One can recognise a Helicase ATP-binding domain in the interval 42–89 (FLGLDKMHSLLLFHDTGVGKTITTTFIIKQLKNIYTNWSILLLVKKHL). 55 to 62 (HDTGVGKT) serves as a coordination point for ATP.

It belongs to the helicase family. NPH I subfamily.

The enzyme catalyses a ribonucleoside 5'-triphosphate + H2O = a ribonucleoside 5'-diphosphate + phosphate + H(+). In terms of biological role, serves two roles in transcription; it acts in concert with viral termination factor/capping enzyme to catalyze release of UUUUUNU-containing nascent RNA from the elongation complex, and it acts by itself as a polymerase elongation factor to facilitate readthrough of intrinsic pause sites. This is Nucleoside triphosphatase I (NPH1) from Swinepox virus (strain Kasza) (SWPV).